The primary structure comprises 1083 residues: Error-prone DNA polymerase (1083 aa).

It belongs to the DNA polymerase type-C family. DnaE2 subfamily.

Its subcellular location is the cytoplasm. The enzyme catalyses DNA(n) + a 2'-deoxyribonucleoside 5'-triphosphate = DNA(n+1) + diphosphate. Its function is as follows. DNA polymerase involved in damage-induced mutagenesis and translesion synthesis (TLS). It is not the major replicative DNA polymerase. The polypeptide is Error-prone DNA polymerase (Xanthomonas oryzae pv. oryzae (strain PXO99A)).